The sequence spans 724 residues: 4-alpha-glucanotransferase (724 aa).

This sequence belongs to the disproportionating enzyme family.

It localises to the cytoplasm. The catalysed reaction is Transfers a segment of a (1-&gt;4)-alpha-D-glucan to a new position in an acceptor, which may be glucose or a (1-&gt;4)-alpha-D-glucan.. In Mycobacterium bovis (strain ATCC BAA-935 / AF2122/97), this protein is 4-alpha-glucanotransferase (malQ).